A 129-amino-acid chain; its full sequence is Prefoldin subunit alpha (129 aa).

This sequence belongs to the prefoldin alpha subunit family. As to quaternary structure, heterohexamer of two alpha and four beta subunits.

It localises to the cytoplasm. Molecular chaperone capable of stabilizing a range of proteins. Seems to fulfill an ATP-independent, HSP70-like function in archaeal de novo protein folding. The protein is Prefoldin subunit alpha of Thermofilum pendens (strain DSM 2475 / Hrk 5).